The following is a 534-amino-acid chain: Apolipoprotein N-acyltransferase (534 aa).

The next 7 helical transmembrane spans lie at 8–28, 31–51, 69–89, 105–125, 127–147, 178–198, and 208–228; these read VILVWGFKRSLLAIGAGAFAV, LPPFGFFAAMFLSFTLLVWLI, AFAVGWLFGFGYFVAGLWWLG, LAILGLPACLAIFYGLAVALA, IFWSDGMGRIAALAAGFGLME, VIGAMGVTALAVFVFSAPALF, and VALAVLLFAAHLGYGAYALYL. The region spanning 246-496 is the CN hydrolase domain; that stretch reads VQPDIDQAAK…TGFIDATVDS (251 aa). The Proton acceptor role is filled by E291. K355 is a catalytic residue. The active-site Nucleophile is the C408. Residues 511-531 form a helical membrane-spanning segment; that stretch reads FWLTEALLILIALISREGFIF.

Belongs to the CN hydrolase family. Apolipoprotein N-acyltransferase subfamily.

It is found in the cell inner membrane. It carries out the reaction N-terminal S-1,2-diacyl-sn-glyceryl-L-cysteinyl-[lipoprotein] + a glycerophospholipid = N-acyl-S-1,2-diacyl-sn-glyceryl-L-cysteinyl-[lipoprotein] + a 2-acyl-sn-glycero-3-phospholipid + H(+). It participates in protein modification; lipoprotein biosynthesis (N-acyl transfer). In terms of biological role, catalyzes the phospholipid dependent N-acylation of the N-terminal cysteine of apolipoprotein, the last step in lipoprotein maturation. In Rhizobium etli (strain CIAT 652), this protein is Apolipoprotein N-acyltransferase.